An 84-amino-acid polypeptide reads, in one-letter code: Small ribosomal subunit protein uS17 (84 aa).

Belongs to the universal ribosomal protein uS17 family. As to quaternary structure, part of the 30S ribosomal subunit.

Its function is as follows. One of the primary rRNA binding proteins, it binds specifically to the 5'-end of 16S ribosomal RNA. The chain is Small ribosomal subunit protein uS17 from Sodalis glossinidius (strain morsitans).